A 445-amino-acid polypeptide reads, in one-letter code: MISNIRDLKQHVGETVTLQAWLTDKSGKGKIQFLKLRDGSGFVQATVFKNDVEEEVFESAKRLTQEQALTLTGEVRADERAPGGVELSVRRLSPISENHAEYPITPKEHGIEFLMDQRHLWLRHRRPWAIMRIRDCVQRAIVDFFHSEGFVRFDAPFFTPNAAEGTTELFEIDLFGEDKAYLSQTGQLHAEAGAFAFGKVYTFGPTFRAEKSKTRRHLLEFWMVEPEVAPSNHKQNMDLQERFVSFLVRRALDECTVELEMLGRDLSKLKGAAEGNYPRVTYTEALEIVRQHIENKDLPPNVQEDVQPVEWGDDLGAPHETILGHHFDRPVMIEKYPAAIKAFYMQPDPEDSRVALCDDMIAPEGYGEIIGGSERIHDYDLLKSRIEHEGLPLEAFDWYLDLRRVGSVPHAGFGMGLERVIAWISGIDHIREAIPFPRMLTRMRP.

The protein belongs to the class-II aminoacyl-tRNA synthetase family. As to quaternary structure, homodimer.

It is found in the cytoplasm. It catalyses the reaction tRNA(Asn) + L-asparagine + ATP = L-asparaginyl-tRNA(Asn) + AMP + diphosphate + H(+). The chain is Asparagine--tRNA ligase from Deinococcus deserti (strain DSM 17065 / CIP 109153 / LMG 22923 / VCD115).